The primary structure comprises 299 residues: Glutamate formimidoyltransferase (299 aa).

His-82 functions as the For formimidoyltransferase activity in the catalytic mechanism. A folate-binding site is contributed by 163–172; that stretch reads GDRKIHPTAG.

This sequence belongs to the formiminotransferase family.

The protein localises to the cytoplasm. It carries out the reaction (6S)-5-formyl-5,6,7,8-tetrahydrofolate + L-glutamate = N-formyl-L-glutamate + (6S)-5,6,7,8-tetrahydrofolate + H(+). The catalysed reaction is 5-formimidoyltetrahydrofolate + L-glutamate = N-formimidoyl-L-glutamate + (6S)-5,6,7,8-tetrahydrofolate. It catalyses the reaction (6S)-5-formyl-5,6,7,8-tetrahydrofolate + ATP = (6R)-5,10-methenyltetrahydrofolate + ADP + phosphate. Its pathway is amino-acid degradation; L-histidine degradation into L-glutamate; L-glutamate from N-formimidoyl-L-glutamate (transferase route): step 1/1. It participates in one-carbon metabolism; tetrahydrofolate interconversion. Functionally, catalyzes the transfer of the formyl group from N-formylglutamate to tetrahydrofolate (THF) to yield 5-formyltetrahydrofolate (5-CHO-THF) and glutamate (Glu). The triglutamate form of 5-CHO-THF (5-CHO-THF-Glu3) can also be used as substrate. It can also catalyze the transfer of the formimino group from N-formiminoglutamate to tetrahydrofolate (THF) to yield 5-formiminotetrahydrofolate (5-NH=CH-THF) and glutamate (Glu). It can replace YgfA to catalyze the irreversible ATP-dependent transformation of 5-CHO-THF to form 5,10-methenyltetrahydrofolate (5,10-CH=THF). This Streptococcus pyogenes serotype M1 protein is Glutamate formimidoyltransferase.